A 393-amino-acid polypeptide reads, in one-letter code: Methylthioribose kinase (393 aa).

ATP contacts are provided by residues Asn38, Lys53, and 107–109 (EDL). Asp225 is a substrate binding site. Residue 242 to 244 (DPE) coordinates ATP. Arg332 contacts substrate.

It belongs to the methylthioribose kinase family. As to quaternary structure, homodimer.

The enzyme catalyses 5-(methylsulfanyl)-D-ribose + ATP = 5-(methylsulfanyl)-alpha-D-ribose 1-phosphate + ADP + H(+). It participates in amino-acid biosynthesis; L-methionine biosynthesis via salvage pathway; S-methyl-5-thio-alpha-D-ribose 1-phosphate from S-methyl-5'-thioadenosine (hydrolase route): step 2/2. In terms of biological role, catalyzes the phosphorylation of methylthioribose into methylthioribose-1-phosphate. The polypeptide is Methylthioribose kinase (Bacillus thuringiensis subsp. konkukian (strain 97-27)).